The sequence spans 196 residues: uncharacterized protein (196 aa).

The protein localises to the mitochondrion. This is an uncharacterized protein from Paramecium tetraurelia.